The sequence spans 312 residues: MKQQLIIGTRSSPLALWQAEFTKAELSKNFPELDIQLKLIKTTGDVLLDSPLSKIGDMGLFTKDIEKHLLAKEIDLAVHSLKDVPTETPEGLILSAFTEREDTRDVIISKNGDNLKQLKPNAKIATSSLRRTSQLLGIRPDFEMGDIRGNLNTRFKRFDESDFDAMILAYAGVHRLNFGDRISEILPHDVLLPAVGQGALGIETRIDDEQTRQIVKVMNNQNSEYCTKAERALLRHLQGGCQIPIGAYATYKNGTLHLSAFVGSVDGKRAIRNEITKENVTAPELAEKTGIELAEELMKQGANEILAEIRKI.

At cysteine 241 the chain carries S-(dipyrrolylmethanemethyl)cysteine.

It belongs to the HMBS family. As to quaternary structure, monomer. It depends on dipyrromethane as a cofactor.

The enzyme catalyses 4 porphobilinogen + H2O = hydroxymethylbilane + 4 NH4(+). The protein operates within porphyrin-containing compound metabolism; protoporphyrin-IX biosynthesis; coproporphyrinogen-III from 5-aminolevulinate: step 2/4. It functions in the pathway porphyrin-containing compound metabolism; chlorophyll biosynthesis. Functionally, tetrapolymerization of the monopyrrole PBG into the hydroxymethylbilane pre-uroporphyrinogen in several discrete steps. The polypeptide is Porphobilinogen deaminase (Prosthecochloris aestuarii (strain DSM 271 / SK 413)).